Here is a 512-residue protein sequence, read N- to C-terminus: 2,3-bisphosphoglycerate-independent phosphoglycerate mutase (512 aa).

The Mn(2+) site is built by aspartate 14 and serine 64. The active-site Phosphoserine intermediate is the serine 64. Residues histidine 125, 155-156, arginine 187, arginine 193, 259-262, and lysine 332 contribute to the substrate site; these read RD and RADR. Residues aspartate 399, histidine 403, aspartate 440, histidine 441, and histidine 459 each contribute to the Mn(2+) site.

This sequence belongs to the BPG-independent phosphoglycerate mutase family. In terms of assembly, monomer. Mn(2+) serves as cofactor.

It carries out the reaction (2R)-2-phosphoglycerate = (2R)-3-phosphoglycerate. It functions in the pathway carbohydrate degradation; glycolysis; pyruvate from D-glyceraldehyde 3-phosphate: step 3/5. In terms of biological role, catalyzes the interconversion of 2-phosphoglycerate and 3-phosphoglycerate. The polypeptide is 2,3-bisphosphoglycerate-independent phosphoglycerate mutase (Ruthia magnifica subsp. Calyptogena magnifica).